Reading from the N-terminus, the 375-residue chain is Protein HrmA (375 aa).

Functionally, unknown. May serve a regulatory function. The chain is Protein HrmA (hrmA) from Pseudomonas syringae pv. syringae.